Reading from the N-terminus, the 508-residue chain is Bifunctional purine biosynthesis protein PurH (508 aa).

The region spanning 1–144 (MTRALLSVSD…KNFASVLPIV (144 aa)) is the MGS-like domain.

The protein belongs to the PurH family.

It catalyses the reaction (6R)-10-formyltetrahydrofolate + 5-amino-1-(5-phospho-beta-D-ribosyl)imidazole-4-carboxamide = 5-formamido-1-(5-phospho-D-ribosyl)imidazole-4-carboxamide + (6S)-5,6,7,8-tetrahydrofolate. The catalysed reaction is IMP + H2O = 5-formamido-1-(5-phospho-D-ribosyl)imidazole-4-carboxamide. It functions in the pathway purine metabolism; IMP biosynthesis via de novo pathway; 5-formamido-1-(5-phospho-D-ribosyl)imidazole-4-carboxamide from 5-amino-1-(5-phospho-D-ribosyl)imidazole-4-carboxamide (10-formyl THF route): step 1/1. The protein operates within purine metabolism; IMP biosynthesis via de novo pathway; IMP from 5-formamido-1-(5-phospho-D-ribosyl)imidazole-4-carboxamide: step 1/1. The sequence is that of Bifunctional purine biosynthesis protein PurH from Leuconostoc mesenteroides subsp. mesenteroides (strain ATCC 8293 / DSM 20343 / BCRC 11652 / CCM 1803 / JCM 6124 / NCDO 523 / NBRC 100496 / NCIMB 8023 / NCTC 12954 / NRRL B-1118 / 37Y).